A 299-amino-acid chain; its full sequence is Phosphatidylserine decarboxylase proenzyme (299 aa).

Catalysis depends on charge relay system; for autoendoproteolytic cleavage activity residues aspartate 115, histidine 171, and serine 258. Residue serine 258 is the Schiff-base intermediate with substrate; via pyruvic acid; for decarboxylase activity of the active site. Serine 258 carries the pyruvic acid (Ser); by autocatalysis modification.

It belongs to the phosphatidylserine decarboxylase family. PSD-B subfamily. Prokaryotic type II sub-subfamily. In terms of assembly, heterodimer of a large membrane-associated beta subunit and a small pyruvoyl-containing alpha subunit. The cofactor is pyruvate. Is synthesized initially as an inactive proenzyme. Formation of the active enzyme involves a self-maturation process in which the active site pyruvoyl group is generated from an internal serine residue via an autocatalytic post-translational modification. Two non-identical subunits are generated from the proenzyme in this reaction, and the pyruvate is formed at the N-terminus of the alpha chain, which is derived from the carboxyl end of the proenzyme. The autoendoproteolytic cleavage occurs by a canonical serine protease mechanism, in which the side chain hydroxyl group of the serine supplies its oxygen atom to form the C-terminus of the beta chain, while the remainder of the serine residue undergoes an oxidative deamination to produce ammonia and the pyruvoyl prosthetic group on the alpha chain. During this reaction, the Ser that is part of the protease active site of the proenzyme becomes the pyruvoyl prosthetic group, which constitutes an essential element of the active site of the mature decarboxylase.

The protein localises to the cell membrane. It carries out the reaction a 1,2-diacyl-sn-glycero-3-phospho-L-serine + H(+) = a 1,2-diacyl-sn-glycero-3-phosphoethanolamine + CO2. It functions in the pathway phospholipid metabolism; phosphatidylethanolamine biosynthesis; phosphatidylethanolamine from CDP-diacylglycerol: step 2/2. In terms of biological role, catalyzes the formation of phosphatidylethanolamine (PtdEtn) from phosphatidylserine (PtdSer). This chain is Phosphatidylserine decarboxylase proenzyme, found in Chlamydia caviae (strain ATCC VR-813 / DSM 19441 / 03DC25 / GPIC) (Chlamydophila caviae).